The primary structure comprises 212 residues: Thiamine-phosphate synthase (212 aa).

Residues 41 to 45 (QYREK) and Asp-76 contribute to the 4-amino-2-methyl-5-(diphosphooxymethyl)pyrimidine site. Residues Asp-77 and Asp-96 each contribute to the Mg(2+) site. Residue Ser-114 coordinates 4-amino-2-methyl-5-(diphosphooxymethyl)pyrimidine. 2-[(2R,5Z)-2-carboxy-4-methylthiazol-5(2H)-ylidene]ethyl phosphate is bound at residue 141–143 (TTS). Lys-144 contacts 4-amino-2-methyl-5-(diphosphooxymethyl)pyrimidine. Residues Gly-172 and 192 to 193 (IS) each bind 2-[(2R,5Z)-2-carboxy-4-methylthiazol-5(2H)-ylidene]ethyl phosphate.

The protein belongs to the thiamine-phosphate synthase family. It depends on Mg(2+) as a cofactor.

The enzyme catalyses 2-[(2R,5Z)-2-carboxy-4-methylthiazol-5(2H)-ylidene]ethyl phosphate + 4-amino-2-methyl-5-(diphosphooxymethyl)pyrimidine + 2 H(+) = thiamine phosphate + CO2 + diphosphate. It catalyses the reaction 2-(2-carboxy-4-methylthiazol-5-yl)ethyl phosphate + 4-amino-2-methyl-5-(diphosphooxymethyl)pyrimidine + 2 H(+) = thiamine phosphate + CO2 + diphosphate. The catalysed reaction is 4-methyl-5-(2-phosphooxyethyl)-thiazole + 4-amino-2-methyl-5-(diphosphooxymethyl)pyrimidine + H(+) = thiamine phosphate + diphosphate. It functions in the pathway cofactor biosynthesis; thiamine diphosphate biosynthesis; thiamine phosphate from 4-amino-2-methyl-5-diphosphomethylpyrimidine and 4-methyl-5-(2-phosphoethyl)-thiazole: step 1/1. In terms of biological role, condenses 4-methyl-5-(beta-hydroxyethyl)thiazole monophosphate (THZ-P) and 2-methyl-4-amino-5-hydroxymethyl pyrimidine pyrophosphate (HMP-PP) to form thiamine monophosphate (TMP). This is Thiamine-phosphate synthase from Leuconostoc citreum (strain KM20).